A 1401-amino-acid chain; its full sequence is Kinesin-like protein KIF27 (1401 aa).

Positions 5-341 constitute a Kinesin motor domain; it reads PVKVAVRIRP…LKYANRARNI (337 aa). An ATP-binding site is contributed by 84–91; the sequence is GQTGSGKT. 2 coiled-coil regions span residues 352-413 and 489-557; these read ESDR…GYQC and LAAD…KLNL. 5 positions are modified to phosphoserine: Ser643, Ser646, Ser672, Ser675, and Ser704. The disordered stretch occupies residues 643–662; it reads SDNSDDEESEGQEKSGTRCR. Coiled coils occupy residues 705-886, 916-1070, 1118-1154, and 1190-1219; these read QELN…IQLK, DHLQ…AAIE, NKVV…LESA, and EGIM…TSRD. At Ser999 the chain carries Phosphoserine. Over residues 1259–1280 the composition is skewed to basic and acidic residues; it reads EELKWASRPESMKLSGREREMD. Residues 1259–1332 form a disordered region; that stretch reads EELKWASRPE…TETDDNQFTK (74 aa). The segment covering 1281–1292 has biased composition (polar residues); sequence SSASSLRTQPNP. Phosphoserine is present on residues Ser1367 and Ser1389.

Belongs to the TRAFAC class myosin-kinesin ATPase superfamily. Kinesin family. KIF27 subfamily. In terms of assembly, interacts with STK36. As to expression, testis, pancreatic islet, germ cell tumors and Jurkat T-cells.

The protein localises to the cytoplasm. It is found in the cytoskeleton. The protein resides in the cell projection. It localises to the cilium. Its function is as follows. Plays an essential role in motile ciliogenesis. This is Kinesin-like protein KIF27 (KIF27) from Homo sapiens (Human).